The following is a 562-amino-acid chain: Arylsulfatase H (562 aa).

Aspartate 15, aspartate 16, and cysteine 55 together coordinate Ca(2+). Cysteine 55 (nucleophile) is an active-site residue. Residue cysteine 55 is modified to 3-oxoalanine (Cys). Lysine 115 is a binding site for substrate. Histidine 117 is an active-site residue. 2 helical membrane passes run 167–187 (LWISTAVLSLVPLLLLIPKYA) and 189–209 (WFVVPWKVILTFALLAFLFFI). Position 271 (histidine 271) interacts with substrate. Ca(2+) contacts are provided by aspartate 323 and asparagine 324.

The protein belongs to the sulfatase family. The cofactor is Ca(2+). The conversion to 3-oxoalanine (also known as C-formylglycine, FGly), of a serine or cysteine residue in prokaryotes and of a cysteine residue in eukaryotes, is critical for catalytic activity.

It localises to the membrane. The protein is Arylsulfatase H (ARSH) of Canis lupus familiaris (Dog).